The sequence spans 116 residues: Large ribosomal subunit protein bL17 (116 aa).

This sequence belongs to the bacterial ribosomal protein bL17 family. Part of the 50S ribosomal subunit. Contacts protein L32.

The polypeptide is Large ribosomal subunit protein bL17 (Gloeothece citriformis (strain PCC 7424) (Cyanothece sp. (strain PCC 7424))).